The sequence spans 225 residues: 7-cyano-7-deazaguanine synthase (225 aa).

9–19 (YSGGLDSTTCL) provides a ligand contact to ATP. Positions 188, 198, 201, and 204 each coordinate Zn(2+).

It belongs to the QueC family. Requires Zn(2+) as cofactor.

The catalysed reaction is 7-carboxy-7-deazaguanine + NH4(+) + ATP = 7-cyano-7-deazaguanine + ADP + phosphate + H2O + H(+). It participates in purine metabolism; 7-cyano-7-deazaguanine biosynthesis. Catalyzes the ATP-dependent conversion of 7-carboxy-7-deazaguanine (CDG) to 7-cyano-7-deazaguanine (preQ(0)). This Geobacter sp. (strain M21) protein is 7-cyano-7-deazaguanine synthase.